The chain runs to 609 residues: 1-deoxy-D-xylulose-5-phosphate synthase (609 aa).

Residues histidine 77 and 118–120 (GHS) contribute to the thiamine diphosphate site. Aspartate 149 is a Mg(2+) binding site. Residues 150–151 (GA), asparagine 178, tyrosine 259, and glutamate 342 contribute to the thiamine diphosphate site. Asparagine 178 contacts Mg(2+).

This sequence belongs to the transketolase family. DXPS subfamily. Homodimer. It depends on Mg(2+) as a cofactor. Thiamine diphosphate serves as cofactor.

It carries out the reaction D-glyceraldehyde 3-phosphate + pyruvate + H(+) = 1-deoxy-D-xylulose 5-phosphate + CO2. Its pathway is metabolic intermediate biosynthesis; 1-deoxy-D-xylulose 5-phosphate biosynthesis; 1-deoxy-D-xylulose 5-phosphate from D-glyceraldehyde 3-phosphate and pyruvate: step 1/1. In terms of biological role, catalyzes the acyloin condensation reaction between C atoms 2 and 3 of pyruvate and glyceraldehyde 3-phosphate to yield 1-deoxy-D-xylulose-5-phosphate (DXP). The polypeptide is 1-deoxy-D-xylulose-5-phosphate synthase (Listeria monocytogenes serotype 4b (strain CLIP80459)).